The primary structure comprises 265 residues: 4-hydroxy-tetrahydrodipicolinate reductase (265 aa).

Residues 7 to 12 (GASGRM) and D33 each bind NAD(+). R34 is a binding site for NADP(+). Residues 96 to 98 (GTT) and 120 to 123 (AANM) contribute to the NAD(+) site. The active-site Proton donor/acceptor is H153. (S)-2,3,4,5-tetrahydrodipicolinate is bound at residue H154. K157 functions as the Proton donor in the catalytic mechanism. Residue 163-164 (GT) coordinates (S)-2,3,4,5-tetrahydrodipicolinate.

This sequence belongs to the DapB family.

The protein resides in the cytoplasm. It catalyses the reaction (S)-2,3,4,5-tetrahydrodipicolinate + NAD(+) + H2O = (2S,4S)-4-hydroxy-2,3,4,5-tetrahydrodipicolinate + NADH + H(+). It carries out the reaction (S)-2,3,4,5-tetrahydrodipicolinate + NADP(+) + H2O = (2S,4S)-4-hydroxy-2,3,4,5-tetrahydrodipicolinate + NADPH + H(+). The protein operates within amino-acid biosynthesis; L-lysine biosynthesis via DAP pathway; (S)-tetrahydrodipicolinate from L-aspartate: step 4/4. Its function is as follows. Catalyzes the conversion of 4-hydroxy-tetrahydrodipicolinate (HTPA) to tetrahydrodipicolinate. The protein is 4-hydroxy-tetrahydrodipicolinate reductase of Burkholderia orbicola (strain AU 1054).